The chain runs to 163 residues: Phosphopantetheine adenylyltransferase (163 aa).

S9 contacts substrate. ATP contacts are provided by residues 9–10 and H17; that span reads SF. Residues K41, I75, and R89 each coordinate substrate. ATP is bound by residues 90-92, E100, and 125-131; these read GIR and HLYVRSD.

Belongs to the bacterial CoaD family. As to quaternary structure, homohexamer. Mg(2+) serves as cofactor.

The protein localises to the cytoplasm. It carries out the reaction (R)-4'-phosphopantetheine + ATP + H(+) = 3'-dephospho-CoA + diphosphate. Its pathway is cofactor biosynthesis; coenzyme A biosynthesis; CoA from (R)-pantothenate: step 4/5. Reversibly transfers an adenylyl group from ATP to 4'-phosphopantetheine, yielding dephospho-CoA (dPCoA) and pyrophosphate. The polypeptide is Phosphopantetheine adenylyltransferase (Borrelia garinii subsp. bavariensis (strain ATCC BAA-2496 / DSM 23469 / PBi) (Borreliella bavariensis)).